Here is a 394-residue protein sequence, read N- to C-terminus: Elongation factor Tu (394 aa).

The region spanning 10-204 (KEHVNVGTIG…AVDTYIENPV (195 aa)) is the tr-type G domain. The interval 19–26 (GHVDHGKT) is G1. 19–26 (GHVDHGKT) contributes to the GTP binding site. T26 contacts Mg(2+). Residues 60 to 64 (GITIN) are G2. Residues 81–84 (DCPG) form a G3 region. Residues 81 to 85 (DCPGH) and 136 to 139 (NKCD) each bind GTP. A G4 region spans residues 136-139 (NKCD). The interval 174 to 176 (SAL) is G5.

It belongs to the TRAFAC class translation factor GTPase superfamily. Classic translation factor GTPase family. EF-Tu/EF-1A subfamily. As to quaternary structure, monomer.

The protein localises to the cytoplasm. It carries out the reaction GTP + H2O = GDP + phosphate + H(+). In terms of biological role, GTP hydrolase that promotes the GTP-dependent binding of aminoacyl-tRNA to the A-site of ribosomes during protein biosynthesis. The polypeptide is Elongation factor Tu (Mycoplasmopsis synoviae (strain 53) (Mycoplasma synoviae)).